The chain runs to 363 residues: Phospho-N-acetylmuramoyl-pentapeptide-transferase (363 aa).

Helical transmembrane passes span 15 to 33 (FTTL…SFIF), 82 to 102 (NTPT…LLIV), 106 to 126 (FYSM…IIGF), 147 to 167 (FILQ…NGYI), 183 to 203 (IVIF…VNLT), 207 to 227 (DGLA…EIFI), 233 to 253 (LIIY…FLKF), 260 to 280 (IFMG…ISIL), 285 to 305 (FTLF…IIQV), and 341 to 361 (IVEN…VLKI).

Belongs to the glycosyltransferase 4 family. MraY subfamily. Mg(2+) is required as a cofactor.

It localises to the cell inner membrane. It catalyses the reaction UDP-N-acetyl-alpha-D-muramoyl-L-alanyl-gamma-D-glutamyl-meso-2,6-diaminopimeloyl-D-alanyl-D-alanine + di-trans,octa-cis-undecaprenyl phosphate = di-trans,octa-cis-undecaprenyl diphospho-N-acetyl-alpha-D-muramoyl-L-alanyl-D-glutamyl-meso-2,6-diaminopimeloyl-D-alanyl-D-alanine + UMP. It participates in cell wall biogenesis; peptidoglycan biosynthesis. In terms of biological role, catalyzes the initial step of the lipid cycle reactions in the biosynthesis of the cell wall peptidoglycan: transfers peptidoglycan precursor phospho-MurNAc-pentapeptide from UDP-MurNAc-pentapeptide onto the lipid carrier undecaprenyl phosphate, yielding undecaprenyl-pyrophosphoryl-MurNAc-pentapeptide, known as lipid I. The protein is Phospho-N-acetylmuramoyl-pentapeptide-transferase of Prochlorococcus marinus (strain MIT 9515).